The primary structure comprises 276 residues: 4-hydroxy-3-methylbut-2-enyl diphosphate reductase (276 aa).

A [4Fe-4S] cluster-binding site is contributed by Cys-12. (2E)-4-hydroxy-3-methylbut-2-enyl diphosphate contacts are provided by His-36 and His-71. Positions 36 and 71 each coordinate dimethylallyl diphosphate. Positions 36 and 71 each coordinate isopentenyl diphosphate. Residue Cys-93 participates in [4Fe-4S] cluster binding. His-121 contacts (2E)-4-hydroxy-3-methylbut-2-enyl diphosphate. His-121 serves as a coordination point for dimethylallyl diphosphate. An isopentenyl diphosphate-binding site is contributed by His-121. Catalysis depends on Glu-123, which acts as the Proton donor. Thr-160 is a binding site for (2E)-4-hydroxy-3-methylbut-2-enyl diphosphate. A [4Fe-4S] cluster-binding site is contributed by Cys-188. Residues Ser-216, Ser-217, Asn-218, and Ser-259 each contribute to the (2E)-4-hydroxy-3-methylbut-2-enyl diphosphate site. Dimethylallyl diphosphate contacts are provided by Ser-216, Ser-217, Asn-218, and Ser-259. Isopentenyl diphosphate-binding residues include Ser-216, Ser-217, Asn-218, and Ser-259.

Belongs to the IspH family. It depends on [4Fe-4S] cluster as a cofactor.

It carries out the reaction isopentenyl diphosphate + 2 oxidized [2Fe-2S]-[ferredoxin] + H2O = (2E)-4-hydroxy-3-methylbut-2-enyl diphosphate + 2 reduced [2Fe-2S]-[ferredoxin] + 2 H(+). It catalyses the reaction dimethylallyl diphosphate + 2 oxidized [2Fe-2S]-[ferredoxin] + H2O = (2E)-4-hydroxy-3-methylbut-2-enyl diphosphate + 2 reduced [2Fe-2S]-[ferredoxin] + 2 H(+). It participates in isoprenoid biosynthesis; dimethylallyl diphosphate biosynthesis; dimethylallyl diphosphate from (2E)-4-hydroxy-3-methylbutenyl diphosphate: step 1/1. The protein operates within isoprenoid biosynthesis; isopentenyl diphosphate biosynthesis via DXP pathway; isopentenyl diphosphate from 1-deoxy-D-xylulose 5-phosphate: step 6/6. Catalyzes the conversion of 1-hydroxy-2-methyl-2-(E)-butenyl 4-diphosphate (HMBPP) into a mixture of isopentenyl diphosphate (IPP) and dimethylallyl diphosphate (DMAPP). Acts in the terminal step of the DOXP/MEP pathway for isoprenoid precursor biosynthesis. In Nautilia profundicola (strain ATCC BAA-1463 / DSM 18972 / AmH), this protein is 4-hydroxy-3-methylbut-2-enyl diphosphate reductase.